We begin with the raw amino-acid sequence, 311 residues long: Dehydrogenase/reductase SDR family member 7C (311 aa).

Residues 1–18 form the signal peptide; that stretch reads MGFLTFLIVPLLILGISG. 41 to 65 is a binding site for NAD(+); that stretch reads VITDAISGLGKECSRVFHSAGARLV. T178 provides a ligand contact to substrate. The active-site Proton acceptor is Y191.

It belongs to the short-chain dehydrogenases/reductases (SDR) family.

Its subcellular location is the secreted. Functionally, putative oxidoreductase. This chain is Dehydrogenase/reductase SDR family member 7C (dhrs7c), found in Xenopus tropicalis (Western clawed frog).